The primary structure comprises 419 residues: Zinc finger protein Pegasus (419 aa).

A Glycyl lysine isopeptide (Lys-Gly) (interchain with G-Cter in SUMO2) cross-link involves residue lysine 5. Positions 36 to 55 (DKEAETLQGAGTDGDQNGLD) are disordered. C2H2-type zinc fingers lie at residues 82–104 (LKCR…IRIH), 110–132 (HRCH…MRSH), and 138–161 (YKCE…RRKH). Residue lysine 185 forms a Glycyl lysine isopeptide (Lys-Gly) (interchain with G-Cter in SUMO2) linkage. Residues 262–273 (LSSLPPENQNPA) show a composition bias toward polar residues. 2 disordered regions span residues 262-284 (LSSL…PDEK) and 297-356 (VSAV…PTLP). Positions 297-311 (VSAVSASIPQSSSPT) are enriched in low complexity. Polar residues predominate over residues 332 to 349 (SEPSAHTSTPSIGNSQPS). 2 C2H2-type zinc fingers span residues 364-386 (HHCQ…MGCH) and 392-416 (FQCN…RGQH).

It belongs to the Ikaros C2H2-type zinc-finger protein family. Self-associates. Interacts with other family members; IKZF1, IKZF2, IKZF3 and IKZF4.

It localises to the nucleus. In terms of biological role, transcriptional repressor that binds the core 5'GNNTGTNG-3' DNA consensus sequence. Involved in megakaryocyte differentiation. The sequence is that of Zinc finger protein Pegasus (Ikzf5) from Mus musculus (Mouse).